Here is a 120-residue protein sequence, read N- to C-terminus: NAD(P)H-quinone oxidoreductase subunit 3 (120 aa).

The next 3 helical transmembrane spans lie at 6-26 (GYDA…LALV), 64-84 (MFAL…PWAV), and 89-109 (LGLL…VALA).

Belongs to the complex I subunit 3 family. As to quaternary structure, NDH-1 can be composed of about 15 different subunits; different subcomplexes with different compositions have been identified which probably have different functions.

Its subcellular location is the cellular thylakoid membrane. It catalyses the reaction a plastoquinone + NADH + (n+1) H(+)(in) = a plastoquinol + NAD(+) + n H(+)(out). The catalysed reaction is a plastoquinone + NADPH + (n+1) H(+)(in) = a plastoquinol + NADP(+) + n H(+)(out). In terms of biological role, NDH-1 shuttles electrons from an unknown electron donor, via FMN and iron-sulfur (Fe-S) centers, to quinones in the respiratory and/or the photosynthetic chain. The immediate electron acceptor for the enzyme in this species is believed to be plastoquinone. Couples the redox reaction to proton translocation, and thus conserves the redox energy in a proton gradient. Cyanobacterial NDH-1 also plays a role in inorganic carbon-concentration. This chain is NAD(P)H-quinone oxidoreductase subunit 3, found in Prochlorococcus marinus (strain SARG / CCMP1375 / SS120).